Consider the following 442-residue polypeptide: C4-dicarboxylate transport protein (442 aa).

A run of 8 helical transmembrane segments spans residues 10 to 30 (VQVL…PSLG), 40 to 60 (FIKL…VSGI), 77 to 97 (LLYF…IVNI), 144 to 164 (FTQG…FALL), 183 to 203 (VIFV…FGAM), 221 to 241 (LMIT…GLIA), 331 to 351 (LLGV…SGFI), and 354 to 374 (AATL…ILGI). Positions 418 to 442 (LPTIEPDVHSEERGEGRELDSLRPA) are disordered. Positions 423–442 (PDVHSEERGEGRELDSLRPA) are enriched in basic and acidic residues.

Belongs to the dicarboxylate/amino acid:cation symporter (DAACS) (TC 2.A.23) family.

The protein resides in the cell membrane. Functionally, responsible for the transport of dicarboxylates such as succinate, fumarate, and malate across the membrane. The sequence is that of C4-dicarboxylate transport protein from Deinococcus deserti (strain DSM 17065 / CIP 109153 / LMG 22923 / VCD115).